The sequence spans 300 residues: uncharacterized protein (300 aa).

This is an uncharacterized protein from Ictalurid herpesvirus 1 (strain Auburn) (IcHV-1).